A 398-amino-acid polypeptide reads, in one-letter code: MAKLTVKDVDLKGKKVLVRVDFNVPLKDGVITNDNRITAALPTIKYIIEQGGRAILFSHLGRVKEESDKAGKSLAPVAADLAAKLGQDVVFPGVTRGAELEAAINALEDGQVLLVENTRYEDVDGKKESKNDPELGKYWASLGDGIFVNDAFGTAHRAHASNVGISANVEKAVAGFLLENEIAYIQEAVETPERPFVAILGGSKVSDKIGVIENLLEKADKVLIGGGMTYTFYKAQGIEIGNSLVEEDKLDVAKALLEKANGKLILPVDSKEANAFAGYTEVRDTEGEAVSEGFLGLDIGPKSIAKFDEALTGAKTVVWNGPMGVFENPDFQAGTIGVMDAIVKQPGVKSIIGGGDSAAAAINLGRADKFSWISTGGGASMELLEGKVLPGLAALTEK.

Substrate-binding positions include 21–23 (DFN), R36, 59–62 (HLGR), R119, and R157. Residues K208, G296, E327, and 354-357 (GGDS) each bind ATP.

This sequence belongs to the phosphoglycerate kinase family. As to quaternary structure, monomer.

The protein localises to the cytoplasm. The enzyme catalyses (2R)-3-phosphoglycerate + ATP = (2R)-3-phospho-glyceroyl phosphate + ADP. Its pathway is carbohydrate degradation; glycolysis; pyruvate from D-glyceraldehyde 3-phosphate: step 2/5. In Streptococcus pneumoniae serotype 2 (strain D39 / NCTC 7466), this protein is Phosphoglycerate kinase.